The sequence spans 66 residues: Large ribosomal subunit protein bL33c (66 aa).

Belongs to the bacterial ribosomal protein bL33 family.

It is found in the plastid. The protein localises to the chloroplast. The polypeptide is Large ribosomal subunit protein bL33c (Liriodendron tulipifera (Tuliptree)).